The sequence spans 155 residues: dCTP deaminase (155 aa).

DCTP contacts are provided by residues 79 to 84 (RSSLAR), Asp95, Gln124, and Tyr138.

This sequence belongs to the dCTP deaminase family. In terms of assembly, homotrimer.

It carries out the reaction dCTP + H2O + H(+) = dUTP + NH4(+). Its pathway is pyrimidine metabolism; dUMP biosynthesis; dUMP from dCTP (dUTP route): step 1/2. Its function is as follows. Catalyzes the deamination of dCTP to dUTP. This Thermococcus kodakarensis (strain ATCC BAA-918 / JCM 12380 / KOD1) (Pyrococcus kodakaraensis (strain KOD1)) protein is dCTP deaminase.